We begin with the raw amino-acid sequence, 90 residues long: Cell division protein CrgA (90 aa).

Positions 1–26 (MPKAKVTKNSIAPVSSNPSANRTPVK) are disordered. Positions 7 to 26 (TKNSIAPVSSNPSANRTPVK) are enriched in polar residues. Helical transmembrane passes span 38-58 (VIMFAFMLVGLLWLVANYLVG) and 69-89 (AWNYGIGFGLLIIGLLMTMGW).

This sequence belongs to the CrgA family.

The protein resides in the cell membrane. In terms of biological role, involved in cell division. In Corynebacterium efficiens (strain DSM 44549 / YS-314 / AJ 12310 / JCM 11189 / NBRC 100395), this protein is Cell division protein CrgA.